The sequence spans 210 residues: Thymidylate kinase (210 aa).

10-17 (GPEGAGKS) serves as a coordination point for ATP.

This sequence belongs to the thymidylate kinase family.

It catalyses the reaction dTMP + ATP = dTDP + ADP. Its function is as follows. Phosphorylation of dTMP to form dTDP in both de novo and salvage pathways of dTTP synthesis. This chain is Thymidylate kinase, found in Pseudomonas aeruginosa (strain LESB58).